A 262-amino-acid polypeptide reads, in one-letter code: Small ribosomal subunit protein uS2 (262 aa).

Residues 223–262 (KSLLEQDGGEQAAGEEVSQDEKDAVVAEAMSEEDFGEDEE) form a disordered region. Residues 227-238 (EQDGGEQAAGEE) show a composition bias toward low complexity. Positions 252 to 262 (MSEEDFGEDEE) are enriched in acidic residues.

The protein belongs to the universal ribosomal protein uS2 family.

In Campylobacter concisus (strain 13826), this protein is Small ribosomal subunit protein uS2.